We begin with the raw amino-acid sequence, 309 residues long: MNRILSVSFYLFFLYLYIYKTYGKVKNTDQEISNIYGTNYYLRNGFLNGKNGKGNKYEDLQEEGEGENDDEEHSNSEESDNDEENEIIVGQDEAPKSDEAEALKSDEAEALKSDEAEARKSDEAEALKSDEAEARKSDEAEALKSDEAEALKSDEAEARKSDEAEALKSDEAEALKSDEAEARKSDEAEARKSDEAEARKSDEAEARKSDEAEALKSDEAEARKSDEAEARKSDEAEALKSDEAEARKSDEAEARKSEAGTEGPKGTGGPGSEAGTEGPKGTGGPGSGGEHSHNKKKSKKSIMNMLILM.

The signal sequence occupies residues 1–23; it reads MNRILSVSFYLFFLYLYIYKTYG. The disordered stretch occupies residues 52-309; it reads GKGNKYEDLQ…KSIMNMLILM (258 aa). Positions 60–86 are enriched in acidic residues; it reads LQEEGEGENDDEEHSNSEESDNDEENE. The segment covering 93–259 has biased composition (basic and acidic residues); that stretch reads EAPKSDEAEA…DEAEARKSEA (167 aa). The segment at 97-256 is 20 X 8 AA approximate tandem repeats of A-[RL]-K-S-D-E-A-E; that stretch reads SDEAEALKSD…RKSDEAEARK (160 aa). Repeat copies occupy residues 257 to 271 and 272 to 286. Residues 257 to 286 form a 2 X 15 AA tandem repeats of S-E-A-G-T-E-G-P-K-G-T-G-G-P-G region; sequence SEAGTEGPKGTGGPGSEAGTEGPKGTGGPG. The span at 263–289 shows a compositional bias: gly residues; sequence GPKGTGGPGSEAGTEGPKGTGGPGSGG.

The protein localises to the parasitophorous vacuole. Its function is as follows. S antigens are soluble heat-stable proteins present in the sera of some infected individuals. The sequence is that of S-antigen protein from Plasmodium falciparum (isolate NF7 / Ghana).